A 460-amino-acid polypeptide reads, in one-letter code: Ammonium transporter Rh type C (460 aa).

Topologically, residues 1-9 (MIWNTNLRW) are cytoplasmic. Residues 10–30 (RLPVACLLLEVALIALFGVFV) traverse the membrane as a helical segment. The Extracellular segment spans residues 31–61 (RYDMDADPHWVQEKVIKNLSTDLENEFYYRY). N48 is a glycosylation site (N-linked (GlcNAc...) asparagine). The helical transmembrane segment at 62–82 (PSFQDVHVMIFVGFGFLMTFL) threads the bilayer. Residues 83 to 89 (QRYGYSS) are Cytoplasmic-facing. Residues 90–110 (VGFNFLLAAFGIQWALLMQGW) form a helical membrane-spanning segment. Residues 111 to 125 (LQSFDGRYILVDLEN) lie on the Extracellular side of the membrane. Residues 126–145 (LINADFCVGSVCVAFGAVLG) traverse the membrane as a helical segment. The Cytoplasmic segment spans residues 146-151 (KVSPVQ). Residues 152 to 174 (LLIMTLFQVTLFSINEYILLNLL) traverse the membrane as a helical segment. At 175-179 (EVKDS) the chain is on the extracellular side. The helical transmembrane segment at 180-200 (GGSMTIHAFGAYFGLTVAWIL) threads the bilayer. At 201 to 219 (YRPNLHLSKERQSSTYHSD) the chain is on the cytoplasmic side. The chain crosses the membrane as a helical span at residues 220 to 240 (LFAMIGTLFLWMYWPSFNSAI). At 241 to 251 (SNHGDAQHRAA) the chain is on the extracellular side. The helical transmembrane segment at 252-272 (INTYCSLAACVLTSVALSSAL) threads the bilayer. Residues 273 to 285 (HRKGKLDMVHIQN) lie on the Cytoplasmic side of the membrane. A helical transmembrane segment spans residues 286–303 (ATLAGGVGLGTVAELMVL). The Extracellular segment spans residues 304–306 (PFG). Residues 307 to 329 (SLIIGFVCGIVSTLGFVYLTPFL) form a helical membrane-spanning segment. Residues 330 to 346 (ESRLHIQDTCGVHNLHG) are Cytoplasmic-facing. A helical transmembrane segment spans residues 347 to 367 (IPGIIGGIAGAVTASIANIDL). Residues 368–396 (YGEEGLAYAFGIERSKLNWSPNMQGRFQA) are Extracellular-facing. The chain crosses the membrane as a helical span at residues 397–417 (AGLFVSLAMALVGGVIVGVIL). At 418–460 (RLPFWGQAPDENCFEDAVYWEIPKEPKSTALRSEDSSIKPPEP) the chain is on the cytoplasmic side.

It belongs to the ammonium transporter (TC 2.A.49) family. Rh subfamily. In terms of assembly, homotrimer. In terms of processing, N-glycosylated.

It is found in the apical cell membrane. It carries out the reaction NH4(+)(in) = NH4(+)(out). The catalysed reaction is methylamine(out) = methylamine(in). It catalyses the reaction CO2(out) = CO2(in). Ammonium transporter involved in the maintenance of acid-base homeostasis. Transports ammonium and its related derivative methylammonium across the plasma membrane of epithelial cells likely contributing to renal transepithelial ammonia transport and ammonia metabolism. Postulated to primarily mediate an electroneutral bidirectional transport of NH3 ammonia species according to a mechanism that implies interaction of an NH4(+) ion with acidic residues of the pore entry followed by dissociation of NH4(+) into NH3 and H(+). As a result NH3 transits through the central pore and is protonated on the extracellular side reforming NH4(+). May act as a CO2 channel providing for renal acid secretion. The protein is Ammonium transporter Rh type C (RHCG) of Bos taurus (Bovine).